The following is a 549-amino-acid chain: Oxygen-dependent choline dehydrogenase (549 aa).

4-33 (DFVIIGSGSAGSAMASRLSEDGKHTVIVLE) lines the FAD pocket. H465 functions as the Proton acceptor in the catalytic mechanism.

This sequence belongs to the GMC oxidoreductase family. FAD serves as cofactor.

The enzyme catalyses choline + A = betaine aldehyde + AH2. It catalyses the reaction betaine aldehyde + NAD(+) + H2O = glycine betaine + NADH + 2 H(+). It participates in amine and polyamine biosynthesis; betaine biosynthesis via choline pathway; betaine aldehyde from choline (cytochrome c reductase route): step 1/1. Involved in the biosynthesis of the osmoprotectant glycine betaine. Catalyzes the oxidation of choline to betaine aldehyde and betaine aldehyde to glycine betaine at the same rate. This Rhizobium rhizogenes (strain K84 / ATCC BAA-868) (Agrobacterium radiobacter) protein is Oxygen-dependent choline dehydrogenase.